We begin with the raw amino-acid sequence, 103 residues long: MYAVFQSGGKQHRVSEGQTVRLEKLDIATGEAVEFDQVLMVANGEEIKIGVPFVDGGKIKAEVVAHGRGEKVKIVKFRRRKHYRKQAGHRQWFTDVKITGISA.

It belongs to the bacterial ribosomal protein bL21 family. In terms of assembly, part of the 50S ribosomal subunit. Contacts protein L20.

Functionally, this protein binds to 23S rRNA in the presence of protein L20. This chain is Large ribosomal subunit protein bL21, found in Pectobacterium carotovorum subsp. carotovorum (strain PC1).